A 605-amino-acid polypeptide reads, in one-letter code: Isocitrate dehydrogenase kinase/phosphatase (605 aa).

Residues 327–333 and Lys348 contribute to the ATP site; that span reads APGIKGL. Asp383 is an active-site residue.

Belongs to the AceK family.

The protein resides in the cytoplasm. It carries out the reaction L-seryl-[isocitrate dehydrogenase] + ATP = O-phospho-L-seryl-[isocitrate dehydrogenase] + ADP + H(+). Functionally, bifunctional enzyme which can phosphorylate or dephosphorylate isocitrate dehydrogenase (IDH) on a specific serine residue. This is a regulatory mechanism which enables bacteria to bypass the Krebs cycle via the glyoxylate shunt in response to the source of carbon. When bacteria are grown on glucose, IDH is fully active and unphosphorylated, but when grown on acetate or ethanol, the activity of IDH declines drastically concomitant with its phosphorylation. The chain is Isocitrate dehydrogenase kinase/phosphatase from Burkholderia orbicola (strain MC0-3).